The chain runs to 348 residues: Chemokine C-C motif receptor-like 2 (348 aa).

The Extracellular segment spans residues 1–43; the sequence is MANYTPAPEDDYDVFIEDDLSDDEIEPCTPYDPKILSAQLVPY. The chain crosses the membrane as a helical span at residues 44–64; it reads LYTTVFMVGLLDNILVVFILV. The Cytoplasmic segment spans residues 65-76; that stretch reads KYKGLRQAENMS. Residues 77–97 traverse the membrane as a helical segment; sequence FLNLALSNLGFLLTLPFWAYA. Topologically, residues 98 to 110 are extracellular; it reads ASHGEGFDDPLCK. Cys-109 and Cys-187 are disulfide-bonded. A helical transmembrane segment spans residues 111–131; the sequence is ILLLLYSIGLYSEAFFNVLLT. The Cytoplasmic portion of the chain corresponds to 132-150; sequence VQRYKEFFHVRRRFSACRT. Residues 151–171 traverse the membrane as a helical segment; sequence VAGSIFISVLVWVTATLVTLP. Residues 172–204 lie on the Extracellular side of the membrane; it reads ELVSYKPQMQSQKYKCFFTGLHFLPADETFWKH. Residues 205–225 form a helical membrane-spanning segment; the sequence is FLTLKMNILGFLLPLFAFVYC. Topologically, residues 226 to 244 are cytoplasmic; it reads YVRMRKTLQFRERNYGLFK. The chain crosses the membrane as a helical span at residues 245–265; that stretch reads LVFTIMAVFLLMWGPYNIVLF. The Extracellular portion of the chain corresponds to 266–292; the sequence is LSAFNEHFSLHGCGSSYNLNKSVQITR. The N-linked (GlcNAc...) asparagine glycan is linked to Asn-285. Residues 293-313 traverse the membrane as a helical segment; the sequence is IIAATHCCVNPLLYVFLDKAF. Residues 314–348 lie on the Cytoplasmic side of the membrane; it reads RKHLCHLFYLCSDTAPQPTEEPAQGASGEEYHLSS.

Belongs to the G-protein coupled receptor 1 family.

The protein localises to the cell membrane. Receptor for CCL19 and chemerin/RARRES2. Does not appear to be a signaling receptor, but may have a role in modulating chemokine-triggered immune responses by capturing and internalizing CCL19 or by presenting RARRES2 ligand to CMKLR1, a functional signaling receptor. Plays a critical role for the development of Th2 responses. This Bos taurus (Bovine) protein is Chemokine C-C motif receptor-like 2 (CCRL2).